The primary structure comprises 98 residues: MVPCRLRPFLWNSPKVAVKRIPRQCIEGIVVSTKMQKTVVIEVERTKKHPKYGKTVQYTKKYKIHDPLEECSVGDRVLAHETRHFSKTKYFRFYRKLY.

The protein belongs to the universal ribosomal protein uS17 family. Part of the 30S ribosomal subunit.

Functionally, one of the primary rRNA binding proteins, it binds specifically to the 5'-end of 16S ribosomal RNA. The protein is Small ribosomal subunit protein uS17B of Bacteroides thetaiotaomicron (strain ATCC 29148 / DSM 2079 / JCM 5827 / CCUG 10774 / NCTC 10582 / VPI-5482 / E50).